Reading from the N-terminus, the 770-residue chain is Protein PAT1 homolog 1 (770 aa).

The interval 1-26 is disordered; sequence MFRYESLEDCPLDEDEDAFQGLGEED. The interval 1-84 is region A; interaction with DDX6/RCK; that stretch reads MFRYESLEDC…EMDLLGDHEE (84 aa). An involved in nuclear foci localization region spans residues 1–397; that stretch reads MFRYESLEDC…HRSSHQDHLR (397 aa). Residues 7-26 show a composition bias toward acidic residues; sequence LEDCPLDEDEDAFQGLGEED. Residues 85–388 are region N; interaction with decapping machinery; it reads NLAERLSKMV…LNGAGDRGSH (304 aa). Residues 86-95 carry the Nuclear export signal motif; it reads LAERLSKMVI. Ser177 carries the post-translational modification Phosphoserine. The residue at position 178 (Thr178) is a Phosphothreonine. Phosphoserine is present on residues Ser179 and Ser184. Thr194 is modified (phosphothreonine). An asymmetric dimethylarginine mark is found at Arg217, Arg223, and Arg263. Residues 223-397 form an involved in RNA-binding region; sequence RYPAPYGERM…HRSSHQDHLR (175 aa). Ser278 bears the Phosphoserine mark. Arg284 bears the Asymmetric dimethylarginine mark. Disordered stretches follow at residues 315–344 and 360–400; these read FRAF…QNLR and QHRR…RKDP. Pro residues predominate over residues 324–337; sequence SATPPPQQHPPGPG. The segment covering 367–380 has biased composition (low complexity); it reads QRQQQNRNQHRNLN. An Omega-N-methylarginine modification is found at Arg385. Residues 385-400 show a composition bias toward basic and acidic residues; that stretch reads RGSHRSSHQDHLRKDP. The tract at residues 389 to 448 is region H; that stretch reads RSSHQDHLRKDPYANLMLQREKDWVSKIQMMQLQSTDPYLDDFYYQNYFEKLEKLSAAEE. Positions 398–770 are involved in nuclear speckle localization; the sequence is KDPYANLMLQ…TKLQLVQGIR (373 aa). The region C stretch occupies residues 449-770; that stretch reads IQGDGPKKER…TKLQLVQGIR (322 aa).

It belongs to the PAT1 family. As to quaternary structure, interacts (via region A) with DDX6/RCK. Interacts (via region H and region C) with LSM1 and LSM4. Interacts (via region N) with DCP1A, DCP2, EDC3, EDC4 and XRN1. Interacts with the CCR4-NOT complex. Interacts with the Lsm-containing SMN-Sm protein complex. Interacts with EIF4ENIF1/4E-T.

The protein localises to the cytoplasm. The protein resides in the P-body. Its subcellular location is the nucleus. It is found in the PML body. It localises to the nucleus speckle. RNA-binding protein involved in deadenylation-dependent decapping of mRNAs, leading to the degradation of mRNAs. Acts as a scaffold protein that connects deadenylation and decapping machinery. Required for cytoplasmic mRNA processing body (P-body) assembly. This chain is Protein PAT1 homolog 1 (PATL1), found in Pongo abelii (Sumatran orangutan).